The sequence spans 364 residues: MVQQLVFSEPRPGKPPRHLADLDADGRASAVAELGLPAFRAKQLAHQYYGRLIADPRQMTDLPAGLRDAIADTMFPILLTAASEVTCDAGQTRKTLWRALDGVTVESVLMRYPHRNTVCISSQAGCGMACPFCATGQGGLSRNLSTAEILEQVRAGAAALRDDFGDRLSNVVFMGMGEPLANYARVVAAVRRIVAAPPQGFGISARSVTVSTVGLAPAIRKLADERLGVTLALSLHAPDDELRDTLVPVNNRWKIAEALDAARYYADVTGRRVSVEYALIRDVNDQPWRADLLGRRLHRALGPLVHVNLIPLNPTPGSQWDASPKPVEREFVRRVRAAGVSCTVRDTRGREISAACGQLAAEGG.

Catalysis depends on Glu106, which acts as the Proton acceptor. One can recognise a Radical SAM core domain in the interval 112 to 351 (YPHRNTVCIS…CTVRDTRGRE (240 aa)). Cys119 and Cys356 form a disulfide bridge. 3 residues coordinate [4Fe-4S] cluster: Cys126, Cys130, and Cys133. S-adenosyl-L-methionine is bound by residues 177 to 178 (GE), Ser211, 234 to 236 (SLH), and Asn313. Cys356 functions as the S-methylcysteine intermediate in the catalytic mechanism.

Belongs to the radical SAM superfamily. RlmN family. The cofactor is [4Fe-4S] cluster.

The protein resides in the cytoplasm. The enzyme catalyses adenosine(2503) in 23S rRNA + 2 reduced [2Fe-2S]-[ferredoxin] + 2 S-adenosyl-L-methionine = 2-methyladenosine(2503) in 23S rRNA + 5'-deoxyadenosine + L-methionine + 2 oxidized [2Fe-2S]-[ferredoxin] + S-adenosyl-L-homocysteine. The catalysed reaction is adenosine(37) in tRNA + 2 reduced [2Fe-2S]-[ferredoxin] + 2 S-adenosyl-L-methionine = 2-methyladenosine(37) in tRNA + 5'-deoxyadenosine + L-methionine + 2 oxidized [2Fe-2S]-[ferredoxin] + S-adenosyl-L-homocysteine. Specifically methylates position 2 of adenine 2503 in 23S rRNA and position 2 of adenine 37 in tRNAs. The polypeptide is Probable dual-specificity RNA methyltransferase RlmN (Mycolicibacterium paratuberculosis (strain ATCC BAA-968 / K-10) (Mycobacterium paratuberculosis)).